The primary structure comprises 267 residues: tRNA pseudouridine synthase A (267 aa).

The active-site Nucleophile is D53. Residue Y114 coordinates substrate.

It belongs to the tRNA pseudouridine synthase TruA family. In terms of assembly, homodimer.

It carries out the reaction uridine(38/39/40) in tRNA = pseudouridine(38/39/40) in tRNA. Formation of pseudouridine at positions 38, 39 and 40 in the anticodon stem and loop of transfer RNAs. This chain is tRNA pseudouridine synthase A, found in Chlamydia trachomatis serovar A (strain ATCC VR-571B / DSM 19440 / HAR-13).